We begin with the raw amino-acid sequence, 105 residues long: Urease subunit beta (105 aa).

The protein belongs to the urease beta subunit family. In terms of assembly, heterotrimer of UreA (gamma), UreB (beta) and UreC (alpha) subunits. Three heterotrimers associate to form the active enzyme.

The protein resides in the cytoplasm. It carries out the reaction urea + 2 H2O + H(+) = hydrogencarbonate + 2 NH4(+). It participates in nitrogen metabolism; urea degradation; CO(2) and NH(3) from urea (urease route): step 1/1. This Marinomonas sp. (strain MWYL1) protein is Urease subunit beta.